Consider the following 104-residue polypeptide: L-rhamnose mutarotase (104 aa).

Tyr18 contributes to the substrate binding site. The active-site Proton donor is the His22. Substrate is bound by residues Tyr41 and Trp76–Trp77.

The protein belongs to the rhamnose mutarotase family. In terms of assembly, homodimer.

It is found in the cytoplasm. The catalysed reaction is alpha-L-rhamnose = beta-L-rhamnose. Its pathway is carbohydrate metabolism; L-rhamnose metabolism. In terms of biological role, involved in the anomeric conversion of L-rhamnose. This chain is L-rhamnose mutarotase, found in Acidiphilium cryptum (strain JF-5).